The primary structure comprises 75 residues: DNA-directed RNA polymerase subunit omega (75 aa).

It belongs to the RNA polymerase subunit omega family. As to quaternary structure, the RNAP catalytic core consists of 2 alpha, 1 beta, 1 beta' and 1 omega subunit. When a sigma factor is associated with the core the holoenzyme is formed, which can initiate transcription.

It carries out the reaction RNA(n) + a ribonucleoside 5'-triphosphate = RNA(n+1) + diphosphate. Promotes RNA polymerase assembly. Latches the N- and C-terminal regions of the beta' subunit thereby facilitating its interaction with the beta and alpha subunits. The protein is DNA-directed RNA polymerase subunit omega of Lysinibacillus sphaericus (strain C3-41).